The sequence spans 401 residues: 8-amino-7-oxononanoate synthase (401 aa).

Arg19 provides a ligand contact to substrate. Pyridoxal 5'-phosphate is bound at residue Gly106–Tyr107. His131 contributes to the substrate binding site. 3 residues coordinate pyridoxal 5'-phosphate: Ser176, His204, and Thr233. Position 236 is an N6-(pyridoxal phosphate)lysine (Lys236). Thr350 provides a ligand contact to substrate.

The protein belongs to the class-II pyridoxal-phosphate-dependent aminotransferase family. BioF subfamily. As to quaternary structure, homodimer. It depends on pyridoxal 5'-phosphate as a cofactor.

The enzyme catalyses 6-carboxyhexanoyl-[ACP] + L-alanine + H(+) = (8S)-8-amino-7-oxononanoate + holo-[ACP] + CO2. Its pathway is cofactor biosynthesis; biotin biosynthesis. Its function is as follows. Catalyzes the decarboxylative condensation of pimeloyl-[acyl-carrier protein] and L-alanine to produce 8-amino-7-oxononanoate (AON), [acyl-carrier protein], and carbon dioxide. This Pseudomonas aeruginosa (strain LESB58) protein is 8-amino-7-oxononanoate synthase.